A 248-amino-acid polypeptide reads, in one-letter code: Putative TrmH family tRNA/rRNA methyltransferase (248 aa).

The S-adenosyl-L-methionine site is built by Gly196, Ile216, and Leu225.

Belongs to the class IV-like SAM-binding methyltransferase superfamily. RNA methyltransferase TrmH family.

In Staphylococcus aureus (strain COL), this protein is Putative TrmH family tRNA/rRNA methyltransferase.